The sequence spans 215 residues: Cytochrome b6 (215 aa).

The chain crosses the membrane as a helical span at residues 32-52 (IFYCLGGITLTCFLVQVATGF). A heme c-binding site is contributed by cysteine 35. Histidine 86 and histidine 100 together coordinate heme b. The next 3 helical transmembrane spans lie at 90-110 (ASMMVLMMILHVFRVYLTGGF), 116-136 (LTWVTGVILAVLTASFGVTGY), and 186-206 (LHTFVLPLLTAVFMLMHFSMI). Histidine 187 and histidine 202 together coordinate heme b.

The protein belongs to the cytochrome b family. PetB subfamily. The 4 large subunits of the cytochrome b6-f complex are cytochrome b6, subunit IV (17 kDa polypeptide, PetD), cytochrome f and the Rieske protein, while the 4 small subunits are PetG, PetL, PetM and PetN. The complex functions as a dimer. Heme b serves as cofactor. Heme c is required as a cofactor.

Its subcellular location is the plastid. It localises to the chloroplast thylakoid membrane. Its function is as follows. Component of the cytochrome b6-f complex, which mediates electron transfer between photosystem II (PSII) and photosystem I (PSI), cyclic electron flow around PSI, and state transitions. This Piper cenocladum (Ant piper) protein is Cytochrome b6.